Reading from the N-terminus, the 259-residue chain is Proteasome subunit alpha (259 aa).

This sequence belongs to the peptidase T1A family. As to quaternary structure, the 20S proteasome core is composed of 14 alpha and 14 beta subunits that assemble into four stacked heptameric rings, resulting in a barrel-shaped structure. The two inner rings, each composed of seven catalytic beta subunits, are sandwiched by two outer rings, each composed of seven alpha subunits. The catalytic chamber with the active sites is on the inside of the barrel. Has a gated structure, the ends of the cylinder being occluded by the N-termini of the alpha-subunits. Is capped at one or both ends by the proteasome regulatory ATPase, PAN.

It is found in the cytoplasm. The formation of the proteasomal ATPase PAN-20S proteasome complex, via the docking of the C-termini of PAN into the intersubunit pockets in the alpha-rings, triggers opening of the gate for substrate entry. Interconversion between the open-gate and close-gate conformations leads to a dynamic regulation of the 20S proteasome proteolysis activity. Component of the proteasome core, a large protease complex with broad specificity involved in protein degradation. This chain is Proteasome subunit alpha, found in Methanococcus maripaludis (strain DSM 14266 / JCM 13030 / NBRC 101832 / S2 / LL).